Consider the following 204-residue polypeptide: Thymidylate kinase (204 aa).

ATP is bound at residue glycine 11–threonine 18.

The protein belongs to the thymidylate kinase family.

The catalysed reaction is dTMP + ATP = dTDP + ADP. The protein operates within pyrimidine metabolism; dTTP biosynthesis. This Cowpox virus (strain GRI-90 / Grishak) (CPV) protein is Thymidylate kinase (TMK).